A 208-amino-acid polypeptide reads, in one-letter code: ATP-dependent Clp protease proteolytic subunit (208 aa).

Catalysis depends on Ser106, which acts as the Nucleophile. The active site involves His131.

It belongs to the peptidase S14 family. In terms of assembly, fourteen ClpP subunits assemble into 2 heptameric rings which stack back to back to give a disk-like structure with a central cavity, resembling the structure of eukaryotic proteasomes.

It is found in the cytoplasm. It carries out the reaction Hydrolysis of proteins to small peptides in the presence of ATP and magnesium. alpha-casein is the usual test substrate. In the absence of ATP, only oligopeptides shorter than five residues are hydrolyzed (such as succinyl-Leu-Tyr-|-NHMec, and Leu-Tyr-Leu-|-Tyr-Trp, in which cleavage of the -Tyr-|-Leu- and -Tyr-|-Trp bonds also occurs).. Cleaves peptides in various proteins in a process that requires ATP hydrolysis. Has a chymotrypsin-like activity. Plays a major role in the degradation of misfolded proteins. The sequence is that of ATP-dependent Clp protease proteolytic subunit from Roseobacter denitrificans (strain ATCC 33942 / OCh 114) (Erythrobacter sp. (strain OCh 114)).